A 432-amino-acid chain; its full sequence is Adenylosuccinate synthetase (432 aa).

GTP contacts are provided by residues 13-19 (GDEGKGK) and 41-43 (GHT). Aspartate 14 functions as the Proton acceptor in the catalytic mechanism. Aspartate 14 and glycine 41 together coordinate Mg(2+). IMP is bound by residues 14 to 17 (DEGK), 39 to 42 (NAGH), threonine 130, arginine 144, glutamine 225, threonine 240, and arginine 304. Histidine 42 functions as the Proton donor in the catalytic mechanism. Position 300–306 (300–306 (ATTGRKR)) interacts with substrate. Residues arginine 306, 332-334 (KLD), and 415-417 (STG) each bind GTP.

The protein belongs to the adenylosuccinate synthetase family. In terms of assembly, homodimer. The cofactor is Mg(2+).

Its subcellular location is the cytoplasm. The catalysed reaction is IMP + L-aspartate + GTP = N(6)-(1,2-dicarboxyethyl)-AMP + GDP + phosphate + 2 H(+). Its pathway is purine metabolism; AMP biosynthesis via de novo pathway; AMP from IMP: step 1/2. Plays an important role in the de novo pathway of purine nucleotide biosynthesis. Catalyzes the first committed step in the biosynthesis of AMP from IMP. This Pseudoalteromonas atlantica (strain T6c / ATCC BAA-1087) protein is Adenylosuccinate synthetase.